Here is an 856-residue protein sequence, read N- to C-terminus: Valine--tRNA ligase (856 aa).

Positions 47–57 match the 'HIGH' region motif; the sequence is PTASGVLHIGH. Positions 578–582 match the 'KMSKS' region motif; the sequence is KMSKS. Lys-581 is an ATP binding site.

The protein belongs to the class-I aminoacyl-tRNA synthetase family. ValS type 2 subfamily. Monomer.

Its subcellular location is the cytoplasm. It carries out the reaction tRNA(Val) + L-valine + ATP = L-valyl-tRNA(Val) + AMP + diphosphate. In terms of biological role, catalyzes the attachment of valine to tRNA(Val). As ValRS can inadvertently accommodate and process structurally similar amino acids such as threonine, to avoid such errors, it has a 'posttransfer' editing activity that hydrolyzes mischarged Thr-tRNA(Val) in a tRNA-dependent manner. This chain is Valine--tRNA ligase, found in Tropheryma whipplei (strain Twist) (Whipple's bacillus).